Here is a 147-residue protein sequence, read N- to C-terminus: 3-hydroxyacyl-[acyl-carrier-protein] dehydratase FabZ (147 aa).

The active site involves His49.

It belongs to the thioester dehydratase family. FabZ subfamily.

It localises to the cytoplasm. It catalyses the reaction a (3R)-hydroxyacyl-[ACP] = a (2E)-enoyl-[ACP] + H2O. In terms of biological role, involved in unsaturated fatty acids biosynthesis. Catalyzes the dehydration of short chain beta-hydroxyacyl-ACPs and long chain saturated and unsaturated beta-hydroxyacyl-ACPs. The chain is 3-hydroxyacyl-[acyl-carrier-protein] dehydratase FabZ from Syntrophotalea carbinolica (strain DSM 2380 / NBRC 103641 / GraBd1) (Pelobacter carbinolicus).